The sequence spans 426 residues: Gamma-glutamyl phosphate reductase (426 aa).

The protein belongs to the gamma-glutamyl phosphate reductase family.

It localises to the cytoplasm. It carries out the reaction L-glutamate 5-semialdehyde + phosphate + NADP(+) = L-glutamyl 5-phosphate + NADPH + H(+). Its pathway is amino-acid biosynthesis; L-proline biosynthesis; L-glutamate 5-semialdehyde from L-glutamate: step 2/2. In terms of biological role, catalyzes the NADPH-dependent reduction of L-glutamate 5-phosphate into L-glutamate 5-semialdehyde and phosphate. The product spontaneously undergoes cyclization to form 1-pyrroline-5-carboxylate. The protein is Gamma-glutamyl phosphate reductase of Cupriavidus pinatubonensis (strain JMP 134 / LMG 1197) (Cupriavidus necator (strain JMP 134)).